The chain runs to 118 residues: Holo-[acyl-carrier-protein] synthase (118 aa).

The Mg(2+) site is built by aspartate 8 and glutamate 60.

It belongs to the P-Pant transferase superfamily. AcpS family. Requires Mg(2+) as cofactor.

Its subcellular location is the cytoplasm. The catalysed reaction is apo-[ACP] + CoA = holo-[ACP] + adenosine 3',5'-bisphosphate + H(+). Transfers the 4'-phosphopantetheine moiety from coenzyme A to a Ser of acyl-carrier-protein. The protein is Holo-[acyl-carrier-protein] synthase of Wolbachia sp. subsp. Drosophila simulans (strain wRi).